The primary structure comprises 147 residues: MKVIFTEDVKGKGKKGELKDVSEGYARNYLIPKNLAVAATSGNIKDLEAQEKSKQKKAEAELQKAKAMKEELEALKIEIPAKAGEGGRLFGAVSTKQIAEALGKQGKKVDKRKIQLDEPIRSLGYTKVPIKIHPEVVATATVHVVEA.

Belongs to the bacterial ribosomal protein bL9 family.

In terms of biological role, binds to the 23S rRNA. The protein is Large ribosomal subunit protein bL9 of Shouchella clausii (strain KSM-K16) (Alkalihalobacillus clausii).